The chain runs to 188 residues: Adenylate kinase (188 aa).

10 to 15 (GCGKGT) lines the ATP pocket. The interval 30-59 (STGDMLRHARAAGTELGRRVAAIMDGGNLV) is NMP. Residues Thr-31, Arg-36, 57–59 (NLV), 85–88 (GFPR), and Gln-92 contribute to the AMP site. An LID region spans residues 126-136 (KRAEEEGRPDD). Arg-127 contributes to the ATP binding site. Residues Arg-133 and Arg-144 each contribute to the AMP site. Gly-172 serves as a coordination point for ATP.

Belongs to the adenylate kinase family. Monomer.

The protein resides in the cytoplasm. The enzyme catalyses AMP + ATP = 2 ADP. Its pathway is purine metabolism; AMP biosynthesis via salvage pathway; AMP from ADP: step 1/1. Catalyzes the reversible transfer of the terminal phosphate group between ATP and AMP. Plays an important role in cellular energy homeostasis and in adenine nucleotide metabolism. The protein is Adenylate kinase of Maricaulis maris (strain MCS10) (Caulobacter maris).